The following is a 513-amino-acid chain: CUGBP Elav-like family member 1 (513 aa).

Thr-31 bears the Phosphothreonine mark. 2 RRM domains span residues 43 to 126 (IKMF…PADS) and 135 to 215 (RKLF…FADT). Residue Lys-136 forms a Glycyl lysine isopeptide (Lys-Gly) (interchain with G-Cter in SUMO2) linkage. Phosphoserine occurs at positions 206 and 329. The tract at residues 304-336 (TPSGTNALTTSSSPLSVLTSSGSSPSSSSSNSV) is disordered. The span at 311 to 336 (LTTSSSPLSVLTSSGSSPSSSSSNSV) shows a compositional bias: low complexity. Residues 428–506 (ANLFIYHLPQ…KRLKVQLKRS (79 aa)) enclose the RRM 3 domain.

This sequence belongs to the CELF/BRUNOL family. As to quaternary structure, associates with polysomes. Interacts with HNRNPH1; the interaction in RNA-dependent. Interacts with PARN. Component of an EIF2 complex at least composed of CELF1/CUGBP1, CALR, CALR3, EIF2S1, EIF2S2, HSP90B1 and HSPA5.

The protein resides in the nucleus. It is found in the cytoplasm. RNA-binding protein implicated in the regulation of several post-transcriptional events. Involved in pre-mRNA alternative splicing, mRNA translation and stability. Mediates exon inclusion and/or exclusion in pre-mRNA that are subject to tissue-specific and developmentally regulated alternative splicing. Specifically activates exon 5 inclusion of cardiac isoforms of TNNT2 during heart remodeling at the juvenile to adult transition. Acts both as an activator and as a repressor of a pair of coregulated exons: promotes inclusion of the smooth muscle (SM) exon but exclusion of the non-muscle (NM) exon in actinin pre-mRNAs. Activates SM exon 5 inclusion by antagonizing the repressive effect of PTB. Promotes exclusion of exon 11 of the INSR pre-mRNA. Inhibits, together with HNRNPH1, insulin receptor (IR) pre-mRNA exon 11 inclusion in myoblast. Increases translation and controls the choice of translation initiation codon of CEBPB mRNA. Increases mRNA translation of CEBPB in aging liver. Increases translation of CDKN1A mRNA by antagonizing the repressive effect of CALR3. Mediates rapid cytoplasmic mRNA deadenylation. Recruits the deadenylase PARN to the poly(A) tail of EDEN-containing mRNAs to promote their deadenylation. Required for completion of spermatogenesis. Binds to (CUG)n triplet repeats in the 3'-UTR of transcripts such as DMPK and to Bruno response elements (BREs). Binds to muscle-specific splicing enhancer (MSE) intronic sites flanking the alternative exon 5 of TNNT2 pre-mRNA. Binds to AU-rich sequences (AREs or EDEN-like) localized in the 3'-UTR of JUN and FOS mRNAs. Binds to the IR RNA. Binds to the 5'-region of CDKN1A and CEBPB mRNAs. Binds with the 5'-region of CEBPB mRNA in aging liver. May be a specific regulator of miRNA biogenesis. Binds to primary microRNA pri-MIR140 and, with CELF2, negatively regulates the processing to mature miRNA. This Pongo abelii (Sumatran orangutan) protein is CUGBP Elav-like family member 1 (CELF1).